Consider the following 319-residue polypeptide: Forkhead box protein B1 (319 aa).

Positions 13 to 107 (KPPYSYISLT…ENGSFLRRRK (95 aa)) form a DNA-binding region, fork-head. Residues 278 to 310 (LSNSSPSMSPTSPQTATSQSSPATPSDTLTNPS) are disordered. The span at 279–305 (SNSSPSMSPTSPQTATSQSSPATPSDT) shows a compositional bias: low complexity.

As to expression, in early gastrulae, expressed in the inner layer of the posterior dorsal ectoderm and in non-involuted mesoderm. By the mid-gastrula stage, expressed solely in the posterior ectoderm. At the end of gastrulation, expressed in ectodermal regions fated to become diencephalon, midbrain and hindbrain, and weakly expressed in regions fated to become spinal cord and tailbud. At the neurula stage, expressed in the midbrain and posterior forebrain (diencephalon) but not in the more anterior forebrain (telencephalon). Also expressed posteriorly in rhombomere 5. At tailbud stages, expression remains in the anterior brain and is also detectable along the length of the central nervous system and in the tailbud.

The protein resides in the nucleus. In terms of biological role, probable transcription factor. May be involved in the early anteroposterior patterning of the neuroectoderm. This Xenopus laevis (African clawed frog) protein is Forkhead box protein B1.